Consider the following 124-residue polypeptide: Glycine cleavage system H protein (124 aa).

A Lipoyl-binding domain is found at T22 to E104. N6-lipoyllysine is present on K63.

It belongs to the GcvH family. In terms of assembly, the glycine cleavage system is composed of four proteins: P, T, L and H. (R)-lipoate is required as a cofactor.

Its function is as follows. The glycine cleavage system catalyzes the degradation of glycine. The H protein shuttles the methylamine group of glycine from the P protein to the T protein. This chain is Glycine cleavage system H protein, found in Salinibacter ruber (strain DSM 13855 / M31).